A 345-amino-acid chain; its full sequence is L-threonine 3-dehydrogenase (345 aa).

Position 42 (Cys42) interacts with Zn(2+). Catalysis depends on charge relay system residues Thr44 and His47. The Zn(2+) site is built by His67, Glu68, Cys97, Cys100, Cys103, and Cys111. NAD(+) contacts are provided by residues Ile179, Asp199, Arg204, 266-268 (LGI), and 290-291 (IY).

The protein belongs to the zinc-containing alcohol dehydrogenase family. In terms of assembly, homotetramer. The cofactor is Zn(2+).

The protein resides in the cytoplasm. The catalysed reaction is L-threonine + NAD(+) = (2S)-2-amino-3-oxobutanoate + NADH + H(+). It functions in the pathway amino-acid degradation; L-threonine degradation via oxydo-reductase pathway; glycine from L-threonine: step 1/2. In terms of biological role, catalyzes the NAD(+)-dependent oxidation of L-threonine to 2-amino-3-ketobutyrate. This Rhizobium etli (strain ATCC 51251 / DSM 11541 / JCM 21823 / NBRC 15573 / CFN 42) protein is L-threonine 3-dehydrogenase.